Here is a 190-residue protein sequence, read N- to C-terminus: Elongation factor P (190 aa).

This sequence belongs to the elongation factor P family.

It is found in the cytoplasm. Its pathway is protein biosynthesis; polypeptide chain elongation. Involved in peptide bond synthesis. Stimulates efficient translation and peptide-bond synthesis on native or reconstituted 70S ribosomes in vitro. Probably functions indirectly by altering the affinity of the ribosome for aminoacyl-tRNA, thus increasing their reactivity as acceptors for peptidyl transferase. In Sulfurihydrogenibium sp. (strain YO3AOP1), this protein is Elongation factor P.